The chain runs to 284 residues: Phosphatidylserine decarboxylase proenzyme (284 aa).

Active-site charge relay system; for autoendoproteolytic cleavage activity residues include Asp-88, His-145, and Ser-248. Residue Ser-248 is the Schiff-base intermediate with substrate; via pyruvic acid; for decarboxylase activity of the active site. A Pyruvic acid (Ser); by autocatalysis modification is found at Ser-248.

The protein belongs to the phosphatidylserine decarboxylase family. PSD-B subfamily. Prokaryotic type I sub-subfamily. As to quaternary structure, heterodimer of a large membrane-associated beta subunit and a small pyruvoyl-containing alpha subunit. Requires pyruvate as cofactor. In terms of processing, is synthesized initially as an inactive proenzyme. Formation of the active enzyme involves a self-maturation process in which the active site pyruvoyl group is generated from an internal serine residue via an autocatalytic post-translational modification. Two non-identical subunits are generated from the proenzyme in this reaction, and the pyruvate is formed at the N-terminus of the alpha chain, which is derived from the carboxyl end of the proenzyme. The autoendoproteolytic cleavage occurs by a canonical serine protease mechanism, in which the side chain hydroxyl group of the serine supplies its oxygen atom to form the C-terminus of the beta chain, while the remainder of the serine residue undergoes an oxidative deamination to produce ammonia and the pyruvoyl prosthetic group on the alpha chain. During this reaction, the Ser that is part of the protease active site of the proenzyme becomes the pyruvoyl prosthetic group, which constitutes an essential element of the active site of the mature decarboxylase.

It is found in the cell membrane. It carries out the reaction a 1,2-diacyl-sn-glycero-3-phospho-L-serine + H(+) = a 1,2-diacyl-sn-glycero-3-phosphoethanolamine + CO2. Its pathway is phospholipid metabolism; phosphatidylethanolamine biosynthesis; phosphatidylethanolamine from CDP-diacylglycerol: step 2/2. Functionally, catalyzes the formation of phosphatidylethanolamine (PtdEtn) from phosphatidylserine (PtdSer). The polypeptide is Phosphatidylserine decarboxylase proenzyme (Delftia acidovorans (strain DSM 14801 / SPH-1)).